We begin with the raw amino-acid sequence, 215 residues long: Orotate phosphoribosyltransferase (215 aa).

K26 contacts 5-phospho-alpha-D-ribose 1-diphosphate. 34–35 contributes to the orotate binding site; it reads FF. 5-phospho-alpha-D-ribose 1-diphosphate contacts are provided by residues 72-73, R99, K100, K103, H105, and 125-133; these read YK and DDVISSGIS. The orotate site is built by S129 and R157.

It belongs to the purine/pyrimidine phosphoribosyltransferase family. PyrE subfamily. Homodimer. Mg(2+) serves as cofactor.

It catalyses the reaction orotidine 5'-phosphate + diphosphate = orotate + 5-phospho-alpha-D-ribose 1-diphosphate. It participates in pyrimidine metabolism; UMP biosynthesis via de novo pathway; UMP from orotate: step 1/2. Its function is as follows. Catalyzes the transfer of a ribosyl phosphate group from 5-phosphoribose 1-diphosphate to orotate, leading to the formation of orotidine monophosphate (OMP). In Halorhodospira halophila (strain DSM 244 / SL1) (Ectothiorhodospira halophila (strain DSM 244 / SL1)), this protein is Orotate phosphoribosyltransferase.